Here is a 353-residue protein sequence, read N- to C-terminus: UPF0283 membrane protein YcjF (353 aa).

A compositionally biased stretch (basic and acidic residues) spans 1-19 (MSEPLKPRIDFAEPLKEEP). The disordered stretch occupies residues 1–35 (MSEPLKPRIDFAEPLKEEPTSAFKAQQTFSEAESR). Helical transmembrane passes span 70–90 (MVMG…VQWT), 100–120 (VALG…GSVV), and 213–233 (ESTL…FIAW).

Belongs to the UPF0283 family.

The protein localises to the cell inner membrane. This Salmonella gallinarum (strain 287/91 / NCTC 13346) protein is UPF0283 membrane protein YcjF.